A 218-amino-acid polypeptide reads, in one-letter code: MSMRPPDPGQASSRARARMVERLRAQGIADEKVLAAMMQIPRHAFVDEGLAFSAYDDTALPIGYQQTISQPLVVARMIEILRAGRELGRTLEVGAGCGYQAAVLSLVATEVFAVERIRPLLDRARENLRPLRLPNVRLKYADGNLGLPEAAPFDTIIVAAAAAGIPGSLKEQLAPGGRLMIPLGSADQRLVMTERHGNIFRESRFEAVRFVPLLTGTE.

Serine 69 is a catalytic residue.

Belongs to the methyltransferase superfamily. L-isoaspartyl/D-aspartyl protein methyltransferase family.

It localises to the cytoplasm. It catalyses the reaction [protein]-L-isoaspartate + S-adenosyl-L-methionine = [protein]-L-isoaspartate alpha-methyl ester + S-adenosyl-L-homocysteine. Its function is as follows. Catalyzes the methyl esterification of L-isoaspartyl residues in peptides and proteins that result from spontaneous decomposition of normal L-aspartyl and L-asparaginyl residues. It plays a role in the repair and/or degradation of damaged proteins. This Aromatoleum aromaticum (strain DSM 19018 / LMG 30748 / EbN1) (Azoarcus sp. (strain EbN1)) protein is Protein-L-isoaspartate O-methyltransferase.